The primary structure comprises 257 residues: Glutamate racemase (257 aa).

Substrate is bound by residues 12–13 (DS) and 44–45 (YG). C75 (proton donor/acceptor) is an active-site residue. Substrate is bound at residue 76-77 (NT). C185 functions as the Proton donor/acceptor in the catalytic mechanism. A substrate-binding site is contributed by 186 to 187 (TH).

This sequence belongs to the aspartate/glutamate racemases family.

It carries out the reaction L-glutamate = D-glutamate. The protein operates within cell wall biogenesis; peptidoglycan biosynthesis. Its function is as follows. Provides the (R)-glutamate required for cell wall biosynthesis. The protein is Glutamate racemase of Clostridium botulinum (strain ATCC 19397 / Type A).